Reading from the N-terminus, the 458-residue chain is Preferentially expressed antigen in melanoma-like protein 1 (458 aa).

An LRR 1; degenerate repeat occupies 99-126 (RCKLQVLDLRVMPLKLWNRLPVFGTAGC). The stretch at 176–200 (SLCCCKLQIWAMSMYYHRKLLEILD) is one LRR 2; degenerate repeat. One copy of the LRR 3; degenerate repeat lies at 201–227 (LDSVQELRMYCISNPVCLLNFAPYLGR). One copy of the LRR 4; degenerate repeat lies at 228–263 (MRNLRCLILSHLWQTFSMTPVEKQQVITQFTSQFLK). LRR repeat units follow at residues 264–289 (LKCL…FWWL), 290–321 (KTPL…SQLK), 322–340 (HLNL…PLRV), 346–373 (ASTL…ALRC), and 374–398 (CTQL…LAYN).

The protein belongs to the PRAME family. Specifically expressed in testis (at protein level).

It localises to the cytoplasm. The protein localises to the cytoplasmic vesicle. Its subcellular location is the secretory vesicle. The protein resides in the acrosome. It is found in the cell projection. It localises to the cilium. The protein localises to the flagellum. Its function is as follows. May play a role in acrosome development and also in sperm maturation and motility. In Mus musculus (Mouse), this protein is Preferentially expressed antigen in melanoma-like protein 1.